A 220-amino-acid polypeptide reads, in one-letter code: Dual specificity phosphatase 29 (220 aa).

The region spanning 54-202 (HVNEVWPKLY…LRELDKQLVQ (149 aa)) is the Tyrosine-protein phosphatase domain. 146–153 (HCVMGRSR) is a binding site for substrate. The active-site Phosphocysteine intermediate is Cys147.

This sequence belongs to the protein-tyrosine phosphatase family. Non-receptor class dual specificity subfamily. In terms of assembly, homodimer. Interacts with PRKAA2.

The protein resides in the cytoplasm. The protein localises to the nucleus. It carries out the reaction O-phospho-L-tyrosyl-[protein] + H2O = L-tyrosyl-[protein] + phosphate. It catalyses the reaction O-phospho-L-seryl-[protein] + H2O = L-seryl-[protein] + phosphate. The enzyme catalyses O-phospho-L-threonyl-[protein] + H2O = L-threonyl-[protein] + phosphate. In terms of biological role, dual specificity phosphatase able to dephosphorylate phosphotyrosine, phosphoserine and phosphothreonine residues within the same substrate, with a preference for phosphotyrosine as a substrate. Involved in the modulation of intracellular signaling cascades. In skeletal muscle regulates systemic glucose homeostasis by activating, AMPK, an energy sensor protein kinase. Affects MAP kinase signaling though modulation of the ERK1/2 cascade in skeletal muscle promoting muscle cell differentiation, development and atrophy. The sequence is that of Dual specificity phosphatase 29 (DUSP29) from Pan troglodytes (Chimpanzee).